A 353-amino-acid chain; its full sequence is C-X-C chemokine receptor type 2 (353 aa).

Residues 1–45 (FNMESDSFEDLWKGEDFSNYSYSSDLPPSLPDVAPCRPESLEINK) are Extracellular-facing. Asn-19 carries an N-linked (GlcNAc...) asparagine glycan. The chain crosses the membrane as a helical span at residues 46-72 (YFVVIIYALVFLLSLLGNSLVMLVILY). At 73-81 (SRVGRSVTD) the chain is on the cytoplasmic side. A helical membrane pass occupies residues 82–102 (VYLLNLALADLLFALTLPIWA). The Extracellular segment spans residues 103 to 117 (ASKVNGWIFGTFLCK). A disulfide bond links Cys-116 and Cys-193. A helical transmembrane segment spans residues 118 to 139 (VVSLLKEVNFYSGILLLACISV). The Cytoplasmic portion of the chain corresponds to 140 to 160 (DRYLAIVHATRTLTQKRYLVK). A helical transmembrane segment spans residues 161 to 180 (FICLSIWGLSLLLALPVLLF). Topologically, residues 181 to 205 (RRTVYSSNVSPACYEDMGNNTANWR) are extracellular. The chain crosses the membrane as a helical span at residues 206–228 (MLLRILPQSFGFIVPLLIMLFCY). The Cytoplasmic portion of the chain corresponds to 229 to 248 (GFTLRTLFKAHMGQKHRAMR). Residues 249–270 (VIFAVVLIFLLCWLPYSLVLLA) form a helical membrane-spanning segment. At 271–291 (DTLMRTQVIQETCERRNHIDR) the chain is on the extracellular side. The helical transmembrane segment at 292–312 (ALDATEILGILHSCLNPLIYA) threads the bilayer. Residues 313 to 353 (FIGQKFRHGLLKILAIHGLISKDSLPKDSRPSFVGSSSGHT) are Cytoplasmic-facing.

The protein belongs to the G-protein coupled receptor 1 family. In terms of assembly, interacts with IL8. Interacts with GNAI2. Post-translationally, phosphorylated upon ligand binding; which is required for desensitization.

It is found in the cell membrane. Functionally, receptor for interleukin-8 which is a powerful neutrophil chemotactic factor. Binding of IL-8 to the receptor causes activation of neutrophils. This response is mediated via a G-protein that activates a phosphatidylinositol-calcium second messenger system. Binds to IL-8 with high affinity. Also binds with high affinity to CXCL3, GRO/MGSA and NAP-2. The chain is C-X-C chemokine receptor type 2 (CXCR2) from Macaca mulatta (Rhesus macaque).